Consider the following 227-residue polypeptide: 2,3-bisphosphoglycerate-dependent phosphoglycerate mutase (227 aa).

Residues 7–14 (RHGQSEWN), 20–21 (TG), R59, 86–89 (ERHY), K97, 113–114 (RR), and 182–183 (GN) each bind substrate. H8 functions as the Tele-phosphohistidine intermediate in the catalytic mechanism. E86 acts as the Proton donor/acceptor in catalysis.

The protein belongs to the phosphoglycerate mutase family. BPG-dependent PGAM subfamily. As to quaternary structure, homodimer.

It carries out the reaction (2R)-2-phosphoglycerate = (2R)-3-phosphoglycerate. It functions in the pathway carbohydrate degradation; glycolysis; pyruvate from D-glyceraldehyde 3-phosphate: step 3/5. Functionally, catalyzes the interconversion of 2-phosphoglycerate and 3-phosphoglycerate. This chain is 2,3-bisphosphoglycerate-dependent phosphoglycerate mutase, found in Neisseria meningitidis serogroup C (strain 053442).